The following is an 808-amino-acid chain: Envelope glycoprotein B (808 aa).

A signal peptide spans 1-19; that stretch reads MVPNKHLLLIILSFSTACG. Residues 20–701 are Virion surface-facing; that stretch reads QTTPTTAVEK…TGILNFIKNP (682 aa). Residue N30 is glycosylated (N-linked (GlcNAc...) asparagine; by host). Cystine bridges form between C45–C498, C62–C454, C136–C201, C291–C338, and C520–C557. Residues 101-107 form an involved in fusion and/or binding to host membrane region; it reads IFNGWTR. The N-linked (GlcNAc...) asparagine; by host glycan is linked to N158. Residues 187-195 are involved in fusion and/or binding to host membrane; sequence GWLWGTYRT. Residues N239, N251, N285, N331, N344, N355, N361, N532, N569, N587, and N598 are each glycosylated (N-linked (GlcNAc...) asparagine; by host). 2 hydrophobic membrane proximal region regions span residues 647–699 and 658–698; these read FDNS…NFIK and IIQD…LNFI. The chain crosses the membrane as a helical span at residues 702–722; it reads LGGMFTFLLIGAVIILVILLV. The Intravirion segment spans residues 723-808; it reads RRTNNMSQAP…KQISTEDKIV (86 aa).

This sequence belongs to the herpesviridae glycoprotein B family. In terms of assembly, homotrimer; disulfide-linked. Binds to heparan sulfate proteoglycans. Interacts with gH/gL heterodimer. A proteolytic cleavage by host furin generates two subunits that remain linked by disulfide bonds.

The protein resides in the virion membrane. The protein localises to the host cell membrane. Its subcellular location is the host endosome membrane. It is found in the host Golgi apparatus membrane. Envelope glycoprotein that forms spikes at the surface of virion envelope. Essential for the initial attachment to heparan sulfate moieties of the host cell surface proteoglycans. Involved in fusion of viral and cellular membranes leading to virus entry into the host cell. Following initial binding to its host receptors, membrane fusion is mediated by the fusion machinery composed at least of gB and the heterodimer gH/gL. May be involved in the fusion between the virion envelope and the outer nuclear membrane during virion egress. This is Envelope glycoprotein B from Saimiriine herpesvirus 2 (strain 11) (SaHV-2).